The primary structure comprises 167 residues: Small ribosomal subunit protein uS9 (167 aa).

Positions 1 to 41 (MNTEAVAPDVAEEEVLTSYTSESSASADDAPKKERPALTVS) are disordered. A compositionally biased stretch (polar residues) spans 17–26 (TSYTSESSAS).

The protein belongs to the universal ribosomal protein uS9 family.

In Renibacterium salmoninarum (strain ATCC 33209 / DSM 20767 / JCM 11484 / NBRC 15589 / NCIMB 2235), this protein is Small ribosomal subunit protein uS9.